A 1560-amino-acid polypeptide reads, in one-letter code: Tenascin-N (1560 aa).

Positions 1 to 26 (MGLWGMLAFPLGFLLASVLLVASAPA) are cleaved as a signal peptide. 3 EGF-like domains span residues 167–198 (DQPTCPGACNGHGRCVDGQCVCDAPYVGVDCA), 199–229 (YAACPQDCSGHGVCVQGVCQCHEDFTAEDCS), and 230–260 (EQRCPGDCSGNGFCDTGECYCEMGFTGPDCS). 9 cysteine pairs are disulfide-bonded: Cys-171–Cys-181, Cys-175–Cys-186, Cys-188–Cys-197, Cys-202–Cys-212, Cys-206–Cys-217, Cys-219–Cys-228, Cys-233–Cys-243, Cys-237–Cys-248, and Cys-250–Cys-259. 12 consecutive Fibronectin type-III domains span residues 264–353 (APQG…DLAV), 354–444 (VGTA…TEID), 445–532 (GPTN…TEID), 533–622 (SPEN…IDSP), 623–706 (KNLV…APTD), 709–798 (GPKN…IDSP), 799–882 (KNLV…APTD), 885–970 (GPKN…APTD), 973–1062 (SPKN…IDSP), 1063–1144 (KNLV…TKAP), 1149–1238 (SPKN…IDPP), and 1239–1325 (RNLR…VDAR). Disordered regions lie at residues 868 to 888 (GTQESRKTSTKAPTDIDGPKN) and 1044 to 1063 (GARESKKANTEGHTDIDSPK). A compositionally biased stretch (basic and acidic residues) spans 1044 to 1061 (GARESKKANTEGHTDIDS). Residues 1323-1540 (DARFPHPSDC…YVELKIRPFG (218 aa)) form the Fibrinogen C-terminal domain. The N-linked (GlcNAc...) asparagine glycan is linked to Asn-1411.

It belongs to the tenascin family. Homohexamer. In terms of tissue distribution, highest expression in kidney followed by spleen and brain. In brain, highest expression is found in hippocampus, cerebellum and olfactory bulb. Expressed in aortic valve, corneal limbus. Expressed in ribs periosteum. During a fracture repair process, expression increases in cells of newly formed perichondrium/peristeum surrounding the cartalaginous callus.

The protein localises to the secreted. The protein resides in the extracellular space. It is found in the extracellular matrix. Functionally, extracellular matrix protein that seems to be a ligand for ITGA8:ITGB1, ITGAV:ITGB1 and ITGA4:ITGB1. Involved in neurite outgrowth and cell migration in hippocampal explants. During endochondral bone formation, inhibits proliferation and differentiation of proteoblasts mediated by canonical WNT signaling. In tumors, stimulates angiogenesis by elongation, migration and sprouting of endothelial cells. Expressed in most mammary tumors, may facilitate tumorigenesis by supporting the migratory behavior of breast cancer cells. The protein is Tenascin-N of Mus musculus (Mouse).